Here is a 306-residue protein sequence, read N- to C-terminus: Homoserine kinase (306 aa).

ATP is bound at residue 91 to 101 (PLARGLGSSAT).

This sequence belongs to the GHMP kinase family. Homoserine kinase subfamily.

Its subcellular location is the cytoplasm. It carries out the reaction L-homoserine + ATP = O-phospho-L-homoserine + ADP + H(+). The protein operates within amino-acid biosynthesis; L-threonine biosynthesis; L-threonine from L-aspartate: step 4/5. Catalyzes the ATP-dependent phosphorylation of L-homoserine to L-homoserine phosphate. This chain is Homoserine kinase, found in Synechocystis sp. (strain ATCC 27184 / PCC 6803 / Kazusa).